The primary structure comprises 771 residues: MTANRLAESLLALSQQEELADLPKDYLLSESEDEGDNDGERKHQKLLEAISSLDGKNRRKLAERSEASLKVSEFNVSSEGSGEKLVLADLLEPVKTSSSLATVKKQLSRVKSKKTVELPLNKEEIERIHREVAFNKTAQVLSKWDPVVLKNRQAEQLVFPLEKEEPAIAPIEHVLSGWKARTPLEQEIFNLLHKNKQPVTDPLLTPVEKASLRAMSLEEAKMRRAELQRARALQSYYEAKARREKKIKSKKYHKVVKKGKAKKALKEFEQLRKVNPAAALEELEKIEKARMMERMSLKHQNSGKWAKSKAIMAKYDLEARQAMQEQLSKNKELTQKLQVASESEEEEGGTEDVEELLVPDVVNEVQMNADGPNPWMLRSCTSDTKEAATQEDPEQLPELEAHGVSESEGEERPVAEEEILLREFEERRSLRKRSELSQDAEPAGSQETKDSGSQEVLSELRVLSQKLKENHQSRKQKASSEGTIPQVQREEPAPEEEEPLLLQRPERVQTLEELEELGKEECFQNKELPRPVLEGQQSERTPNNRPDAPKEKKKKEQMIDLQNLLTTQSPSVKSLAVPTIEELEDEEERNHRQMIKEAFAGDDVIRDFLKEKREAVEASKPKDVDLTLPGWGEWGGVGLKPSAKKRRRFLIKAPEGPPRKDKNLPNVIINEKRNIHAAAHQVRVLPYPFTHHWQFERTIQTPIGSTWNTQRAFQKLTTPKVVTKPGHIINPIKAEDVGYRSSSRSDLSVIQRNPKRITTRHKKQLKKCSVD.

The disordered stretch occupies residues 23–49 (PKDYLLSESEDEGDNDGERKHQKLLEA). Ser-29, Ser-31, Ser-52, Ser-77, and Ser-81 each carry phosphoserine. Positions 40–67 (ERKHQKLLEAISSLDGKNRRKLAERSEA) form a coiled coil. A Glycyl lysine isopeptide (Lys-Gly) (interchain with G-Cter in SUMO2) cross-link involves residue Lys-122. The residue at position 205 (Thr-205) is a Phosphothreonine. Coiled coils occupy residues 216-290 (SLEE…EKAR) and 317-347 (LEAR…EEEE). 2 disordered regions span residues 334–355 (TQKL…DVEE) and 367–557 (MNAD…KKEQ). Residues 342 to 355 (ESEEEEGGTEDVEE) show a composition bias toward acidic residues. Basic and acidic residues predominate over residues 399-436 (LEAHGVSESEGEERPVAEEEILLREFEERRSLRKRSEL). Phosphoserine occurs at positions 405 and 407. Arg-433 is modified (citrulline). Residues Ser-437 and Ser-445 each carry the phosphoserine modification. Lys-449 participates in a covalent cross-link: Glycyl lysine isopeptide (Lys-Gly) (interchain with G-Cter in SUMO2). Ser-453 carries the post-translational modification Phosphoserine. A compositionally biased stretch (basic and acidic residues) spans 504–529 (RPERVQTLEELEELGKEECFQNKELP). Lys-519 participates in a covalent cross-link: Glycyl lysine isopeptide (Lys-Gly) (interchain with G-Cter in SUMO2). A compositionally biased stretch (polar residues) spans 535–544 (GQQSERTPNN). The span at 547-557 (DAPKEKKKKEQ) shows a compositional bias: basic and acidic residues. Phosphoserine is present on Ser-569. At Arg-589 the chain carries Citrulline. Lys-733 is covalently cross-linked (Glycyl lysine isopeptide (Lys-Gly) (interchain with G-Cter in SUMO2)). Residues 740 to 751 (RSSSRSDLSVIQ) are compositionally biased toward polar residues. The interval 740–771 (RSSSRSDLSVIQRNPKRITTRHKKQLKKCSVD) is disordered. The segment covering 753–771 (NPKRITTRHKKQLKKCSVD) has biased composition (basic residues).

Belongs to the UTP14 family. As to quaternary structure, interacts with DHX37. In terms of processing, citrullinated by PADI4. Ubiquitously expressed.

Its subcellular location is the nucleus. The protein resides in the nucleolus. May be required for ribosome biogenesis. This is U3 small nucleolar RNA-associated protein 14 homolog A (UTP14A) from Homo sapiens (Human).